We begin with the raw amino-acid sequence, 204 residues long: Large ribosomal subunit protein uL4 (204 aa).

The segment at 49 to 75 (TKGRSDVSGGGKKPWRQKGRGGARAGS) is disordered.

Belongs to the universal ribosomal protein uL4 family. As to quaternary structure, part of the 50S ribosomal subunit.

One of the primary rRNA binding proteins, this protein initially binds near the 5'-end of the 23S rRNA. It is important during the early stages of 50S assembly. It makes multiple contacts with different domains of the 23S rRNA in the assembled 50S subunit and ribosome. Its function is as follows. Forms part of the polypeptide exit tunnel. The chain is Large ribosomal subunit protein uL4 from Campylobacter jejuni subsp. doylei (strain ATCC BAA-1458 / RM4099 / 269.97).